The chain runs to 270 residues: Glucan endo-1,3-beta-glucosidase (270 aa).

An N-terminal signal peptide occupies residues 1–18 (MNAFTFPLLLAFCAFAHG). Residues 22 to 270 (LDWEDEFNGG…VEYVKKWTWN (249 aa)) enclose the GH16 domain. The Nucleophile role is filled by Glu-137. Glu-142 (proton donor) is an active-site residue.

It belongs to the glycosyl hydrolase 16 family.

It localises to the secreted. The enzyme catalyses Hydrolysis of (1-&gt;3)-beta-D-glucosidic linkages in (1-&gt;3)-beta-D-glucans.. With respect to regulation, ca(2+) does not affect the enzyme activity nor the thermostability. Other cations, such as Mg(2+), Mn(2+), Cu(2+), Zn(2+), Ag(+) or Hg(2+) do not cause any serious adverse effect on the activity. Also no significant change in the activity in response to the addition of 1 mM EDTA. Hydrolyzes laminarin majorily to glucose (G1), laminaribiose (L2), laminaritriose (L3), laminaritetraose (L4) and laminaripentaose (L5). Hydrolyzes laminarioligosaccharides L3, L4, L5 and laminarihexaose (L6) to G1, L2 and L3. Hardly hydrolyzes L2. Does not hydrolyze lichenan, pustulan, carboxymethyl cellulose, locust bean gum or soluble starch. This chain is Glucan endo-1,3-beta-glucosidase, found in Cryptopygus antarcticus (Antarctic springtail).